Here is a 226-residue protein sequence, read N- to C-terminus: LIM domain-containing protein PLIM2a (226 aa).

2 consecutive LIM zinc-binding domains span residues 8-68 and 104-164; these read DKCK…LFKE and DKCA…LFLE. The disordered stretch occupies residues 173 to 226; the sequence is QAAANHRRSASSGGASPPSDDHKPDDTASIPEAKEDDAAPEAAGEEEPEPVVES. The segment covering 191-209 has biased composition (basic and acidic residues); sequence SDDHKPDDTASIPEAKEDD. Residues 210-226 are compositionally biased toward acidic residues; it reads AAPEAAGEEEPEPVVES.

Interacts with F-actin. As to expression, predominantly expressed in flowers, in the tapetum and in pollen grains. Detected in leaves and stems.

It localises to the cytoplasm. Its subcellular location is the cytoskeleton. Functionally, binds to actin filaments and promotes cross-linking into thick bundles. Has an actin-stabilizing activity. The actin regulatory activities are inhibited by pH &gt; 6.8 but are [Ca(2+)] independent. This is LIM domain-containing protein PLIM2a from Arabidopsis thaliana (Mouse-ear cress).